Reading from the N-terminus, the 426-residue chain is Glutamate-1-semialdehyde 2,1-aminomutase (426 aa).

The residue at position 265 (Lys-265) is an N6-(pyridoxal phosphate)lysine.

The protein belongs to the class-III pyridoxal-phosphate-dependent aminotransferase family. HemL subfamily. In terms of assembly, homodimer. The cofactor is pyridoxal 5'-phosphate.

It localises to the cytoplasm. The enzyme catalyses (S)-4-amino-5-oxopentanoate = 5-aminolevulinate. It participates in porphyrin-containing compound metabolism; protoporphyrin-IX biosynthesis; 5-aminolevulinate from L-glutamyl-tRNA(Glu): step 2/2. The protein is Glutamate-1-semialdehyde 2,1-aminomutase of Paraburkholderia phymatum (strain DSM 17167 / CIP 108236 / LMG 21445 / STM815) (Burkholderia phymatum).